A 715-amino-acid chain; its full sequence is Polyribonucleotide nucleotidyltransferase (715 aa).

2 residues coordinate Mg(2+): aspartate 489 and aspartate 495. A KH domain is found at proline 556–isoleucine 615. The 69-residue stretch at glycine 625 to arginine 693 folds into the S1 motif domain.

It belongs to the polyribonucleotide nucleotidyltransferase family. Requires Mg(2+) as cofactor.

Its subcellular location is the cytoplasm. The enzyme catalyses RNA(n+1) + phosphate = RNA(n) + a ribonucleoside 5'-diphosphate. Involved in mRNA degradation. Catalyzes the phosphorolysis of single-stranded polyribonucleotides processively in the 3'- to 5'-direction. This Beijerinckia indica subsp. indica (strain ATCC 9039 / DSM 1715 / NCIMB 8712) protein is Polyribonucleotide nucleotidyltransferase.